A 208-amino-acid polypeptide reads, in one-letter code: GTP cyclohydrolase 1 (208 aa).

Zn(2+)-binding residues include Cys98, His101, and Cys169.

It belongs to the GTP cyclohydrolase I family. As to quaternary structure, toroid-shaped homodecamer, composed of two pentamers of five dimers.

It catalyses the reaction GTP + H2O = 7,8-dihydroneopterin 3'-triphosphate + formate + H(+). It functions in the pathway cofactor biosynthesis; 7,8-dihydroneopterin triphosphate biosynthesis; 7,8-dihydroneopterin triphosphate from GTP: step 1/1. In Agrobacterium fabrum (strain C58 / ATCC 33970) (Agrobacterium tumefaciens (strain C58)), this protein is GTP cyclohydrolase 1.